The following is a 330-amino-acid chain: Stearoyl-CoA desaturase 5 (330 aa).

Over 1–49 the chain is Cytoplasmic; it reads MPGPATDAGKIPFCDAKEEIRAGLESSEGGGGPERPGARGQRQNIVWRN. Substrate is bound at residue Asn-49. The helical transmembrane segment at 50–70 threads the bilayer; it reads VVLMSLLHLGAVYSLVLIPKA. Over 71–72 the chain is Lumenal; the sequence is KP. The helical transmembrane segment at 73–93 threads the bilayer; the sequence is LTLLWAYFCFLLAALGVTAGA. Residues His-94 and His-99 each coordinate Fe cation. The short motif at 94–99 is the Histidine box-1 element; that stretch reads HRLWSH. Residues 94 to 193 lie on the Cytoplasmic side of the membrane; sequence HRLWSHRSYR…VVRIQRKYYK (100 aa). Substrate contacts are provided by Asn-122, Arg-129, and Asp-130. Residues His-131, His-134, and His-135 each contribute to the Fe cation site. Residues 131 to 135 carry the Histidine box-2 motif; the sequence is HRAHH. Substrate contacts are provided by Arg-162 and Lys-163. A helical transmembrane segment spans residues 194-214; the sequence is ISVVLMCFVVPTLVPWYIWGE. Position 215 (Ser-215) is a topological domain, lumenal. The helical transmembrane segment at 216-238 threads the bilayer; it reads LWNSYFLASILRYTISLNISWLV. Trp-236 contributes to the substrate binding site. The Cytoplasmic portion of the chain corresponds to 239–330; sequence NSAAHMYGNR…RKARTGDSSA (92 aa). Residues His-243, His-272, His-275, and His-276 each coordinate Fe cation. Residues 272 to 276 carry the Histidine box-3 motif; sequence HNYHH.

The protein belongs to the fatty acid desaturase type 1 family. As to quaternary structure, may self-associate and form homodimers. It depends on Fe(2+) as a cofactor. Detected in fetal brain, and at lower levels in fetal kidney. Detected in adult brain and pancreas, and at lower levels in kidney and lung. Expressed in spiral ganglion cells and the organ of Corti of fetal cochlea.

It is found in the endoplasmic reticulum membrane. It catalyses the reaction octadecanoyl-CoA + 2 Fe(II)-[cytochrome b5] + O2 + 2 H(+) = (9Z)-octadecenoyl-CoA + 2 Fe(III)-[cytochrome b5] + 2 H2O. The catalysed reaction is hexadecanoyl-CoA + 2 Fe(II)-[cytochrome b5] + O2 + 2 H(+) = (9Z)-hexadecenoyl-CoA + 2 Fe(III)-[cytochrome b5] + 2 H2O. Stearoyl-CoA desaturase that utilizes O(2) and electrons from reduced cytochrome b5 to introduce the first double bond into saturated fatty acyl-CoA substrates. Catalyzes the insertion of a cis double bond at the delta-9 position into fatty acyl-CoA substrates including palmitoyl-CoA and stearoyl-CoA. Gives rise to a mixture of 16:1 and 18:1 unsaturated fatty acids. Involved in neuronal cell proliferation and differentiation through down-regulation of EGFR/AKT/MAPK and Wnt signaling pathways. This is Stearoyl-CoA desaturase 5 (SCD5) from Homo sapiens (Human).